The following is a 127-amino-acid chain: Large ribosomal subunit protein bL12 (127 aa).

The protein belongs to the bacterial ribosomal protein bL12 family. Homodimer. Part of the ribosomal stalk of the 50S ribosomal subunit. Forms a multimeric L10(L12)X complex, where L10 forms an elongated spine to which 2 to 4 L12 dimers bind in a sequential fashion. Binds GTP-bound translation factors.

Forms part of the ribosomal stalk which helps the ribosome interact with GTP-bound translation factors. Is thus essential for accurate translation. The polypeptide is Large ribosomal subunit protein bL12 (Streptomyces avermitilis (strain ATCC 31267 / DSM 46492 / JCM 5070 / NBRC 14893 / NCIMB 12804 / NRRL 8165 / MA-4680)).